We begin with the raw amino-acid sequence, 223 residues long: uncharacterized protein (223 aa).

Positions 5 to 116 constitute a Response regulatory domain; sequence RILIVEDDVM…ELLLRMRNML (112 aa). Position 52 is a 4-aspartylphosphate (Asp-52). The segment at residues 121-219 is a DNA-binding region (ompR/PhoB-type); sequence GTFTQIKHLY…IYGEGYRLNT (99 aa).

Post-translationally, phosphorylated by YbdK.

The protein resides in the cytoplasm. Its function is as follows. Member of the two-component regulatory system YbdK/YbdJ. This is an uncharacterized protein from Bacillus subtilis (strain 168).